The chain runs to 122 residues: Large ribosomal subunit protein uL18 (122 aa).

This sequence belongs to the universal ribosomal protein uL18 family. Part of the 50S ribosomal subunit; part of the 5S rRNA/L5/L18/L25 subcomplex. Contacts the 5S and 23S rRNAs.

In terms of biological role, this is one of the proteins that bind and probably mediate the attachment of the 5S RNA into the large ribosomal subunit, where it forms part of the central protuberance. This is Large ribosomal subunit protein uL18 from Mycobacterium leprae (strain TN).